The primary structure comprises 355 residues: Peptide chain release factor 1 (355 aa).

Glutamine 231 is subject to N5-methylglutamine.

It belongs to the prokaryotic/mitochondrial release factor family. In terms of processing, methylated by PrmC. Methylation increases the termination efficiency of RF1.

It is found in the cytoplasm. In terms of biological role, peptide chain release factor 1 directs the termination of translation in response to the peptide chain termination codons UAG and UAA. This is Peptide chain release factor 1 from Sulfurovum sp. (strain NBC37-1).